A 287-amino-acid chain; its full sequence is 3-beta-hydroxysteroid sulfotransferase (287 aa).

Residue Lys44–Trp49 coordinates 3'-phosphoadenylyl sulfate. Substrate-binding residues include Trp72 and Trp77. Residue His99 is the Proton acceptor of the active site. 3'-phosphoadenylyl sulfate-binding positions include Arg121, Ser129, Tyr184, Ser218–Met223, and Arg247–Gly249.

The protein belongs to the sulfotransferase 1 family. As to quaternary structure, homodimer. Liver, intestine and kidney.

It localises to the cytoplasm. The catalysed reaction is an alcohol + 3'-phosphoadenylyl sulfate = an alkyl sulfate + adenosine 3',5'-bisphosphate + H(+). Functionally, sulfotransferase that utilizes 3'-phospho-5'-adenylyl sulfate (PAPS) as sulfonate donor to catalyze the sulfonation of 3-beta-hydroxyl groups of neutral steroids. High preference for C21 steroid (pregnenolone). The sequence is that of 3-beta-hydroxysteroid sulfotransferase (STD2) from Cavia porcellus (Guinea pig).